We begin with the raw amino-acid sequence, 35 residues long: Small toxic polypeptide LdrD (35 aa).

Residues 10–32 form a helical membrane-spanning segment; sequence FWHDLAAPVIAGILASMIVNWLN.

This sequence belongs to the Ldr toxic peptide family.

It is found in the cell inner membrane. Toxic component of a type I toxin-antitoxin (TA) system. Overexpression causes rapid cell killing and nucleoid condensation of the host cell. Overexpression induces stress-response and a number of membrane protein genes. May inhibit ATP synthesis due to its insertion in the cell inner membrane. This Escherichia coli (strain K12) protein is Small toxic polypeptide LdrD (ldrD).